Reading from the N-terminus, the 557-residue chain is Putative inactive polypeptide N-acetylgalactosaminyltransferase 11 (557 aa).

The Cytoplasmic portion of the chain corresponds to 1–4 (MKSL). Residues 5–27 (LFGTPCSCAIFILVYCIITLFIW) form a helical; Signal-anchor for type II membrane protein membrane-spanning segment. At 28 to 557 (FLYTDNLSNA…MRDICLSVNH (530 aa)) the chain is on the lumenal side. N-linked (GlcNAc...) asparagine glycans are attached at residues Asn33 and Asn103. Disulfide bonds link Cys99/Cys325, Cys316/Cys397, Cys437/Cys450, Cys472/Cys486, and Cys511/Cys526. Residues 109 to 215 (TVTVSIVIAI…RGWLPPLLEP (107 aa)) are catalytic subdomain A. Asn220 carries an N-linked (GlcNAc...) asparagine glycan. The tract at residues 271–333 (PYPSSQLEGR…PCSRVGIIYK (63 aa)) is catalytic subdomain B. N-linked (GlcNAc...) asparagine glycosylation occurs at Asn379. In terms of domain architecture, Ricin B-type lectin spans 456-557 (EDWTLTSRCQ…MRDICLSVNH (102 aa)).

This sequence belongs to the glycosyltransferase 2 family. GalNAc-T subfamily.

The protein resides in the golgi apparatus membrane. Probable inactive glycosyltransferase. This is Putative inactive polypeptide N-acetylgalactosaminyltransferase 11 from Drosophila melanogaster (Fruit fly).